A 121-amino-acid polypeptide reads, in one-letter code: Protein TusC (121 aa).

It belongs to the DsrF/TusC family. Heterohexamer, formed by a dimer of trimers. The hexameric TusBCD complex contains 2 copies each of TusB, TusC and TusD. The TusBCD complex interacts with TusE.

It localises to the cytoplasm. Functionally, part of a sulfur-relay system required for 2-thiolation of 5-methylaminomethyl-2-thiouridine (mnm(5)s(2)U) at tRNA wobble positions. The polypeptide is Protein TusC (Yersinia enterocolitica serotype O:8 / biotype 1B (strain NCTC 13174 / 8081)).